A 159-amino-acid chain; its full sequence is Ribosomal RNA large subunit methyltransferase H (159 aa).

Residues Leu-76, Gly-108, and 127–132 (FSKMTF) each bind S-adenosyl-L-methionine.

This sequence belongs to the RNA methyltransferase RlmH family. As to quaternary structure, homodimer.

The protein localises to the cytoplasm. It catalyses the reaction pseudouridine(1915) in 23S rRNA + S-adenosyl-L-methionine = N(3)-methylpseudouridine(1915) in 23S rRNA + S-adenosyl-L-homocysteine + H(+). In terms of biological role, specifically methylates the pseudouridine at position 1915 (m3Psi1915) in 23S rRNA. In Staphylococcus carnosus (strain TM300), this protein is Ribosomal RNA large subunit methyltransferase H.